The sequence spans 236 residues: Purine nucleoside phosphorylase DeoD-type (236 aa).

Histidine 5 is an a purine D-ribonucleoside binding site. Phosphate-binding positions include glycine 21, arginine 25, arginine 44, and 88-91; that span reads RVGT. A purine D-ribonucleoside-binding positions include 180–182 and 204–205; these read EME and SD. Aspartate 205 functions as the Proton donor in the catalytic mechanism.

Belongs to the PNP/UDP phosphorylase family. In terms of assembly, homohexamer; trimer of homodimers.

It carries out the reaction a purine D-ribonucleoside + phosphate = a purine nucleobase + alpha-D-ribose 1-phosphate. It catalyses the reaction a purine 2'-deoxy-D-ribonucleoside + phosphate = a purine nucleobase + 2-deoxy-alpha-D-ribose 1-phosphate. Its function is as follows. Catalyzes the reversible phosphorolytic breakdown of the N-glycosidic bond in the beta-(deoxy)ribonucleoside molecules, with the formation of the corresponding free purine bases and pentose-1-phosphate. The protein is Purine nucleoside phosphorylase DeoD-type of Shewanella baltica (strain OS155 / ATCC BAA-1091).